The chain runs to 104 residues: Flagellar hook-basal body complex protein FliE (104 aa).

This sequence belongs to the FliE family.

It localises to the bacterial flagellum basal body. The chain is Flagellar hook-basal body complex protein FliE from Escherichia coli (strain SE11).